The primary structure comprises 69 residues: ATP synthase subunits region ORF 1 (69 aa).

The chain is ATP synthase subunits region ORF 1 from Fuscovulum blasticum (Rhodobacter blasticus).